Reading from the N-terminus, the 132-residue chain is Small ribosomal subunit protein uS8 (132 aa).

It belongs to the universal ribosomal protein uS8 family. In terms of assembly, part of the 30S ribosomal subunit. Contacts proteins S5 and S12.

In terms of biological role, one of the primary rRNA binding proteins, it binds directly to 16S rRNA central domain where it helps coordinate assembly of the platform of the 30S subunit. The chain is Small ribosomal subunit protein uS8 from Flavobacterium johnsoniae (strain ATCC 17061 / DSM 2064 / JCM 8514 / BCRC 14874 / CCUG 350202 / NBRC 14942 / NCIMB 11054 / UW101) (Cytophaga johnsonae).